A 275-amino-acid chain; its full sequence is Type III pantothenate kinase (275 aa).

9 to 16 contributes to the ATP binding site; that stretch reads DIGNTRLK. Residues Y114 and 121–124 each bind substrate; that span reads GVDR. D123 functions as the Proton acceptor in the catalytic mechanism. Residue T147 coordinates ATP. T209 provides a ligand contact to substrate.

It belongs to the type III pantothenate kinase family. Homodimer. NH4(+) serves as cofactor. The cofactor is K(+).

Its subcellular location is the cytoplasm. The enzyme catalyses (R)-pantothenate + ATP = (R)-4'-phosphopantothenate + ADP + H(+). The protein operates within cofactor biosynthesis; coenzyme A biosynthesis; CoA from (R)-pantothenate: step 1/5. Functionally, catalyzes the phosphorylation of pantothenate (Pan), the first step in CoA biosynthesis. The sequence is that of Type III pantothenate kinase from Cupriavidus pinatubonensis (strain JMP 134 / LMG 1197) (Cupriavidus necator (strain JMP 134)).